Here is an 83-residue protein sequence, read N- to C-terminus: uncharacterized protein (83 aa).

A run of 3 helical transmembrane segments spans residues 5 to 22, 32 to 49, and 56 to 78; these read VLLSIIIFLGINQNVYSI, IIKIVIILGIVILIFSPA, and IGTILGLACAYFTYKYIIPIFIA.

It localises to the cell membrane. This is an uncharacterized protein from Rickettsia prowazekii (strain Madrid E).